The primary structure comprises 361 residues: Transmembrane protein 116 (361 aa).

The next 7 membrane-spanning stretches (helical) occupy residues 29-49 (WIQM…ILYA), 64-84 (FLLS…GLLF), 103-123 (TLYM…YTGL), 147-167 (LGPV…FVAG), 210-230 (CMAI…IFMG), 261-281 (MVLY…LATM), and 295-315 (VALY…NCLV).

It is found in the membrane. This chain is Transmembrane protein 116 (tmem116), found in Danio rerio (Zebrafish).